We begin with the raw amino-acid sequence, 286 residues long: Glycine--tRNA ligase alpha subunit (286 aa).

Belongs to the class-II aminoacyl-tRNA synthetase family. As to quaternary structure, tetramer of two alpha and two beta subunits.

Its subcellular location is the cytoplasm. It carries out the reaction tRNA(Gly) + glycine + ATP = glycyl-tRNA(Gly) + AMP + diphosphate. This is Glycine--tRNA ligase alpha subunit from Thermotoga petrophila (strain ATCC BAA-488 / DSM 13995 / JCM 10881 / RKU-1).